The following is a 668-amino-acid chain: Cyclin-dependent kinase 11.2 (668 aa).

The tract at residues 1 to 265 is disordered; it reads MSNYSTNGSR…EQWESMTENE (265 aa). Basic and acidic residues-rich tracts occupy residues 35–73, 85–127, and 140–163; these read KTKE…DHRD, YCRD…DSLR, and LPDD…KTVM. Positions 164–181 are enriched in acidic residues; the sequence is EVEDVEMSPVEMLDEEEV. Composition is skewed to basic and acidic residues over residues 197–212 and 245–265; these read NEPE…DPES and PDDK…TENE. The Protein kinase domain occupies 304 to 600; the sequence is YVILNVIAEG…ASEALQHDWF (297 aa). ATP contacts are provided by residues 310 to 318 and Lys333; that span reads IAEGTYGEV. Asp432 acts as the Proton acceptor in catalysis.

Belongs to the protein kinase superfamily. CMGC Ser/Thr protein kinase family. CDC2/CDKX subfamily. As to expression, expressed in somatic cells and at varying levels throughout the germline (at protein level). Highly expressed in the germ line of hermaphrodites (at protein level).

The protein resides in the nucleus. The protein localises to the cytoplasm. It carries out the reaction L-seryl-[protein] + ATP = O-phospho-L-seryl-[protein] + ADP + H(+). It catalyses the reaction L-threonyl-[protein] + ATP = O-phospho-L-threonyl-[protein] + ADP + H(+). Functionally, probable cyclin-dependent kinase whose activity is most likely regulated by the cyclin cyl-1/Cylin-L. Acts partially redundantly with cdk-11.1 to ensure embryonic viability. In contrast to cdk-11.1, not essential for male and female fertility. In Caenorhabditis elegans, this protein is Cyclin-dependent kinase 11.2.